We begin with the raw amino-acid sequence, 196 residues long: Carnitine operon protein CaiE (196 aa).

The disordered stretch occupies residues 177 to 196 (RQMEENRPRLQGTTDVMPKR).

The protein belongs to the transferase hexapeptide repeat family.

It participates in amine and polyamine metabolism; carnitine metabolism. Functionally, overproduction of CaiE stimulates the activity of CaiB and CaiD. The sequence is that of Carnitine operon protein CaiE from Escherichia coli O17:K52:H18 (strain UMN026 / ExPEC).